The sequence spans 127 residues: Vacuolar ATPase assembly integral membrane protein VMA21 (127 aa).

The interval 1 to 28 is disordered; that stretch reads MATRRNPTKESITTSPPPDQQPRQPGEL. The Cytoplasmic segment spans residues 1-45; that stretch reads MATRRNPTKESITTSPPPDQQPRQPGELEHREAIQLRDLPGYPQQ. The helical transmembrane segment at 46–66 threads the bilayer; the sequence is VLWKLIIYSIAVLVLPLSAYF. At 67 to 79 the chain is on the lumenal side; that stretch reads YSVNYVFDGNTTY. Residues 80–100 form a helical membrane-spanning segment; the sequence is AGATAAITANLILFSYIVVAM. The Cytoplasmic segment spans residues 101–127; sequence REDKGDQEQLREQQQLRGNKEETKKMK. Residues 107 to 127 are disordered; it reads QEQLREQQQLRGNKEETKKMK. Over residues 118 to 127 the composition is skewed to basic and acidic residues; that stretch reads GNKEETKKMK. The Prevents secretion from ER motif lies at 124-127; it reads KKMK.

Belongs to the VMA21 family.

The protein localises to the endoplasmic reticulum membrane. It localises to the endoplasmic reticulum-Golgi intermediate compartment membrane. It is found in the cytoplasmic vesicle. Its subcellular location is the COPII-coated vesicle membrane. In terms of biological role, required for the assembly of the V0 complex of the vacuolar ATPase (V-ATPase) in the endoplasmic reticulum. This Coccidioides immitis (strain RS) (Valley fever fungus) protein is Vacuolar ATPase assembly integral membrane protein VMA21.